The sequence spans 291 residues: Probable cell wall amidase LytH (291 aa).

The signal sequence occupies residues 1–40 (MKKIEAWLSKKGLKNKRTLIVVIAFVLFIIFLFLLLNSNS). One can recognise an SH3b domain in the interval 41–105 (EDSGNITITE…WIAGWHTNLD (65 aa)). A disordered region spans residues 118–140 (QGKTIVLDPGHGGSDQGASSNTK). The 165-residue stretch at 122–286 (IVLDPGHGGS…LEQAIVDGLK (165 aa)) folds into the MurNAc-LAA domain.

The protein belongs to the N-acetylmuramoyl-L-alanine amidase 3 family.

The protein resides in the secreted. Its function is as follows. Probably involved in cell-wall metabolism. The sequence is that of Probable cell wall amidase LytH (lytH) from Staphylococcus aureus (strain USA300).